The primary structure comprises 360 residues: U7 snRNA-associated Sm-like protein LSm11 (360 aa).

The segment at 1-29 (MEERERGARSAGAGSPARPPSPRLDVSSD) is disordered. A phosphoserine mark is found at Ser-15 and Ser-21. Arg-41 is subject to Omega-N-methylarginine. Residues 68-143 (RGGGRGRGRA…PGRSRKAPRN (76 aa)) are disordered. Residues 78–94 (RGAAAGSGVPAAPGPSG) are compositionally biased toward low complexity. Lys-120 participates in a covalent cross-link: Glycyl lysine isopeptide (Lys-Gly) (interchain with G-Cter in SUMO2). Position 154 is a phosphoserine (Ser-154). Residues 154 to 229 (SPLGELHRCI…LTLTRLFDRL (76 aa)) enclose the Sm domain. The SM 1 stretch occupies residues 171–204 (VHIRTFKGLRGVCTGFLVAFDKFWNMALTDVDET). A disordered region spans residues 268-333 (ADTGRGSHKR…SRKKKRKPKV (66 aa)). Phosphoserine is present on Ser-280. Residues 299–322 (GRTTRTDGSSVGGTFSRATTLSRG) are compositionally biased toward polar residues. The tract at residues 343–356 (INQIFIRGENVLLV) is SM 2.

This sequence belongs to the snRNP Sm proteins family. As to quaternary structure, component of the heptameric ring U7 snRNP complex, or U7 Sm protein core complex, at least composed of LSM10, LSM11, SNRPB, SNRPD3, SNRPE, SNRPF, SNRPG and U7 snRNA. Formation of the U7 snRNP is an ATP-dependent process mediated by a specialized SMN complex containing at least the Sm protein core complex and additionally, the U7-specific LSM10 and LSM11 proteins. Identified in a histone pre-mRNA complex, at least composed of ERI1, LSM11, SLBP, SNRPB, SYNCRIP and YBX1. Interacts (via the Sm domains) with CLNS1A. Interacts with SMN and ZNF473. Interacts with PRMT5 and WDR77.

The protein resides in the nucleus. Functionally, component of the U7 snRNP complex that is involved in the histone 3'-end pre-mRNA processing. Increases U7 snRNA levels but not histone 3'-end pre-mRNA processing activity, when overexpressed. Required for cell cycle progression from G1 to S phases. Binds specifically to the Sm-binding site of U7 snRNA. This is U7 snRNA-associated Sm-like protein LSm11 from Homo sapiens (Human).